We begin with the raw amino-acid sequence, 200 residues long: 6,7-dimethyl-8-ribityllumazine synthase (200 aa).

5-amino-6-(D-ribitylamino)uracil contacts are provided by residues Trp-25, 59–61 (SWE), and 119–121 (VLI). Position 124-125 (124-125 (ET)) interacts with (2S)-2-hydroxy-3-oxobutyl phosphate. His-127 serves as the catalytic Proton donor. Residue Phe-152 participates in 5-amino-6-(D-ribitylamino)uracil binding. (2S)-2-hydroxy-3-oxobutyl phosphate is bound at residue Arg-166.

It belongs to the DMRL synthase family. In terms of assembly, homopentamer.

The enzyme catalyses (2S)-2-hydroxy-3-oxobutyl phosphate + 5-amino-6-(D-ribitylamino)uracil = 6,7-dimethyl-8-(1-D-ribityl)lumazine + phosphate + 2 H2O + H(+). The protein operates within cofactor biosynthesis; riboflavin biosynthesis; riboflavin from 2-hydroxy-3-oxobutyl phosphate and 5-amino-6-(D-ribitylamino)uracil: step 1/2. Its function is as follows. Catalyzes the formation of 6,7-dimethyl-8-ribityllumazine by condensation of 5-amino-6-(D-ribitylamino)uracil with 3,4-dihydroxy-2-butanone 4-phosphate. This is the penultimate step in the biosynthesis of riboflavin. In Pyricularia oryzae (strain 70-15 / ATCC MYA-4617 / FGSC 8958) (Rice blast fungus), this protein is 6,7-dimethyl-8-ribityllumazine synthase.